The chain runs to 136 residues: Histone H3.2 (136 aa).

A disordered region spans residues methionine 1 to arginine 43. At lysine 5 the chain carries N6-methylated lysine. Lysine 10 is modified (N6-acetyllysine; alternate). At lysine 10 the chain carries N6-methylated lysine; alternate. The residue at position 11 (serine 11) is a Phosphoserine. At threonine 12 the chain carries Phosphothreonine. Lysine 15 bears the N6-acetyllysine mark. N6-acetyllysine; alternate is present on residues lysine 19 and lysine 24. 2 positions are modified to N6-methylated lysine; alternate: lysine 19 and lysine 24. The residue at position 28 (lysine 28) is an N6-methylated lysine. Position 29 is a phosphoserine (serine 29). At lysine 37 the chain carries N6-methylated lysine.

The protein belongs to the histone H3 family. In terms of assembly, the nucleosome is a histone octamer containing two molecules each of H2A, H2B, H3 and H4 assembled in one H3-H4 heterotetramer and two H2A-H2B heterodimers. The octamer wraps approximately 147 bp of DNA. Acetylation is generally linked to gene activation. Can be acetylated to form H3K9ac, H3K14ac, H3K18ac and H3K23ac. H3K9ac could compete with H3K9me and prevent gene silencing. H3K9ac is restricted to euchromatin. In terms of processing, methylated to form mainly H3K4me, H3K9me, H3K18me, H3K23me, H3K27me and H3K36me. H3K4me1/2/3, H3K9me3, H3K27me3 and H3K36me1/2/3 are typical marks for euchromatin, whereas heterochromatic chromocenters are enriched in H3K9me1/2 and H3K27me1/2. H2BK143ub1 is probably prerequisite for H3K4me. Post-translationally, can be phosphorylated to form H3S10ph, H3T11ph and H3S28ph. As to expression, expressed in bicellular pollen, root tips, shoot apices, young leaves and ovules.

The protein resides in the nucleus. The protein localises to the nucleolus. It localises to the chromosome. Core component of nucleosome. Nucleosomes wrap and compact DNA into chromatin, limiting DNA accessibility to the cellular machineries which require DNA as a template. Histones thereby play a central role in transcription regulation, DNA repair, DNA replication and chromosomal stability. DNA accessibility is regulated via a complex set of post-translational modifications of histones, also called histone code, and nucleosome remodeling. This is Histone H3.2 (YAH3) from Lilium longiflorum (Trumpet lily).